Here is a 103-residue protein sequence, read N- to C-terminus: Sec-independent protein translocase protein TatA (103 aa).

Residues Met1 to Phe21 traverse the membrane as a helical segment. Positions Glu48–Lys103 are disordered. The span at Asp59–Leu74 shows a compositional bias: polar residues.

This sequence belongs to the TatA/E family. In terms of assembly, the Tat system comprises two distinct complexes: a TatABC complex, containing multiple copies of TatA, TatB and TatC subunits, and a separate TatA complex, containing only TatA subunits. Substrates initially bind to the TatABC complex, which probably triggers association of the separate TatA complex to form the active translocon.

Its subcellular location is the cell inner membrane. Its function is as follows. Part of the twin-arginine translocation (Tat) system that transports large folded proteins containing a characteristic twin-arginine motif in their signal peptide across membranes. TatA could form the protein-conducting channel of the Tat system. The chain is Sec-independent protein translocase protein TatA from Bartonella tribocorum (strain CIP 105476 / IBS 506).